The sequence spans 130 residues: Mini-ribonuclease 3 (130 aa).

Asp19 is an active-site residue. Positions Glu69–Ala91 are disordered.

The protein belongs to the MrnC RNase family. As to quaternary structure, homodimer. Mg(2+) serves as cofactor.

Its subcellular location is the cytoplasm. Functionally, involved in correct processing of both the 5' and 3' ends of 23S rRNA precursor. Processes 30S rRNA precursor transcript even in absence of ribonuclease 3 (Rnc); Rnc processes 30S rRNA into smaller rRNA precursors. This Symbiobacterium thermophilum (strain DSM 24528 / JCM 14929 / IAM 14863 / T) protein is Mini-ribonuclease 3.